Consider the following 439-residue polypeptide: Glutamate--tRNA ligase 1 (439 aa).

The 'HIGH' region motif lies at 6 to 16 (PSPTGDMHIGN). The 'KMSKS' region motif lies at 232–236 (KMSKR). Lysine 235 lines the ATP pocket.

The protein belongs to the class-I aminoacyl-tRNA synthetase family. Glutamate--tRNA ligase type 1 subfamily. As to quaternary structure, monomer.

Its subcellular location is the cytoplasm. It carries out the reaction tRNA(Glu) + L-glutamate + ATP = L-glutamyl-tRNA(Glu) + AMP + diphosphate. Catalyzes the attachment of glutamate to tRNA(Glu) in a two-step reaction: glutamate is first activated by ATP to form Glu-AMP and then transferred to the acceptor end of tRNA(Glu). The polypeptide is Glutamate--tRNA ligase 1 (Helicobacter acinonychis (strain Sheeba)).